A 425-amino-acid polypeptide reads, in one-letter code: MIDIKLIRQNPDLVKEALRKRGEDPATIDEILKIDADWRTTITKTNELRSRRNEISKNVARLKKEGKNTEAEALIEEGKRLGEEIKALEEKEKELQKQLNDLLLMVPNIPHESVPVGEDESQNVEVRRWGEPREFDFTPLAHWDLGPAWGLMDFDRATKLSGSRFTVMYGKLARLERALINFMLDVHTKEHGYTEVWVPHLVKRETITITGQLPKFEEELYLAERDDLFLIPTAEVPLAALHSGEILEEKELPKKYVAYTPCYRREAGSYGKDVRGMIRQHQFDKVELVWVTTPERSFEDLEQLVKDAETILQKLELPYRVVSLCTGDLGFTSAKTYDIEVWLPSYNAYKEISSCSNVTDFQARRGNMRYRRRSDGKLEYVHTLNGSGIAVGRALVAILENYQQPDGSVRVPEVLVPYTGFEVIP.

233-235 is a binding site for L-serine; sequence TAE. 264 to 266 contacts ATP; the sequence is RRE. Position 287 (E287) interacts with L-serine. ATP is bound at residue 351 to 354; sequence EISS. L-serine is bound at residue S387.

The protein belongs to the class-II aminoacyl-tRNA synthetase family. Type-1 seryl-tRNA synthetase subfamily. As to quaternary structure, homodimer. The tRNA molecule binds across the dimer.

The protein resides in the cytoplasm. The catalysed reaction is tRNA(Ser) + L-serine + ATP = L-seryl-tRNA(Ser) + AMP + diphosphate + H(+). It catalyses the reaction tRNA(Sec) + L-serine + ATP = L-seryl-tRNA(Sec) + AMP + diphosphate + H(+). It participates in aminoacyl-tRNA biosynthesis; selenocysteinyl-tRNA(Sec) biosynthesis; L-seryl-tRNA(Sec) from L-serine and tRNA(Sec): step 1/1. Catalyzes the attachment of serine to tRNA(Ser). Is also able to aminoacylate tRNA(Sec) with serine, to form the misacylated tRNA L-seryl-tRNA(Sec), which will be further converted into selenocysteinyl-tRNA(Sec). In Thermotoga petrophila (strain ATCC BAA-488 / DSM 13995 / JCM 10881 / RKU-1), this protein is Serine--tRNA ligase.